Here is a 122-residue protein sequence, read N- to C-terminus: Small ribosomal subunit protein uS13 (122 aa).

The disordered stretch occupies residues 95–122; sequence SLPVRGQRTHTNARTRKGPAKSIAGKKK.

It belongs to the universal ribosomal protein uS13 family. Part of the 30S ribosomal subunit. Forms a loose heterodimer with protein S19. Forms two bridges to the 50S subunit in the 70S ribosome.

Functionally, located at the top of the head of the 30S subunit, it contacts several helices of the 16S rRNA. In the 70S ribosome it contacts the 23S rRNA (bridge B1a) and protein L5 of the 50S subunit (bridge B1b), connecting the 2 subunits; these bridges are implicated in subunit movement. Contacts the tRNAs in the A and P-sites. In Mesorhizobium japonicum (strain LMG 29417 / CECT 9101 / MAFF 303099) (Mesorhizobium loti (strain MAFF 303099)), this protein is Small ribosomal subunit protein uS13.